The following is a 388-amino-acid chain: Beta-1,4-galactosyltransferase 5 (388 aa).

Over 1–14 (MRVRRGLLRLPRRS) the chain is Cytoplasmic. The helical; Signal-anchor for type II membrane protein transmembrane segment at 15–35 (LLAALFFFSLSSSLLYFVYVA) threads the bilayer. The Lumenal segment spans residues 36 to 388 (PGIVNTYLFM…TPELAQVTEY (353 aa)). N-linked (GlcNAc...) asparagine glycosylation is found at asparagine 77, asparagine 81, asparagine 90, asparagine 111, and asparagine 128. An intrachain disulfide couples cysteine 114 to cysteine 158. Residues 169–173 (PFRNR), 208–210 (FNR), 235–236 (VD), tyrosine 264, and tryptophan 296 each bind UDP-alpha-D-galactose. A disulfide bond links cysteine 229 and cysteine 248. Aspartate 236 contacts Mn(2+). N-acetyl-D-glucosamine is bound at residue 298–301 (GEDD). 329 to 330 (YH) contacts UDP-alpha-D-galactose. An N-acetyl-D-glucosamine-binding site is contributed by arginine 340. Asparagine 364 and asparagine 373 each carry an N-linked (GlcNAc...) asparagine glycan.

It belongs to the glycosyltransferase 7 family. As to quaternary structure, (Microbial infection) Interacts with porcine reproductive and respiratory syndrome virus GP5. Mn(2+) serves as cofactor.

It localises to the golgi apparatus. The protein localises to the golgi stack membrane. It catalyses the reaction a beta-D-glucosyl-(1&lt;-&gt;1')-N-acylsphing-4-enine + UDP-alpha-D-galactose = a beta-D-Gal-(1-&gt;4)-beta-D-Glc-(1&lt;-&gt;1)-Cer(d18:1(4E)) + UDP + H(+). The protein operates within protein modification; protein glycosylation. Its pathway is sphingolipid metabolism. Catalyzes the synthesis of lactosylceramide (LacCer) via the transfer of galactose from UDP-galactose to glucosylceramide (GlcCer). LacCer is the starting point in the biosynthesis of all gangliosides (membrane-bound glycosphingolipids) which play pivotal roles in the CNS including neuronal maturation and axonal and myelin formation. Plays a role in the glycosylation of BMPR1A and regulation of its protein stability. Essential for extraembryonic development during early embryogenesis. In terms of biological role, (Microbial infection) May play a role in the glycosylation of porcine reproductive and respiratory syndrome virus GP5 protein and may be involved in the regulation of viral proliferation. The protein is Beta-1,4-galactosyltransferase 5 (B4GALT5) of Sus scrofa (Pig).